Here is a 642-residue protein sequence, read N- to C-terminus: Transcription factor 4 (642 aa).

Over residues Met-1–Asn-25 the composition is skewed to polar residues. The segment at Met-1 to Arg-59 is essential for MYOD1 inhibition. Disordered stretches follow at residues Met-1–Gly-296, His-311–Leu-354, Pro-444–Asn-545, and Lys-609–Met-642. Phosphoserine is present on residues Ser-42, Ser-63, and Ser-68. Polar residues-rich tracts occupy residues Gly-83–His-98, Gly-112–Asn-130, Pro-181–Phe-191, Gly-218–Cys-230, and Pro-241–Ile-281. The span at Thr-312–Pro-323 shows a compositional bias: low complexity. Polar residues predominate over residues Asn-340–Asn-349. Ser-347 carries the post-translational modification Phosphoserine. The segment at Leu-354–Leu-375 is leucine-zipper. 2 stretches are compositionally biased toward low complexity: residues Pro-444–Gln-455 and Gly-478–Glu-487. A Phosphoserine modification is found at Ser-490. Composition is skewed to basic and acidic residues over residues Lys-502–Lys-517 and Pro-530–Asn-545. The bHLH domain maps to Glu-539–Leu-592. Residues Gln-594–Ser-617 are class A specific domain.

Efficient DNA binding requires dimerization with another bHLH protein. Forms homo- or heterooligomers with myogenin. Interacts with HIVEP2. Interacts with NEUROD2. Interacts with AGBL1. As to expression, widely expressed.

The protein resides in the nucleus. Transcription factor that binds to the immunoglobulin enhancer Mu-E5/KE5-motif. Involved in the initiation of neuronal differentiation. Activates transcription by binding to the E box (5'-CANNTG-3'). Binds to the thyroglobulin promoter. The sequence is that of Transcription factor 4 (TCF4) from Canis lupus familiaris (Dog).